The chain runs to 111 residues: Nucleoid-associated protein NMCC_1355 (111 aa).

The protein belongs to the YbaB/EbfC family. In terms of assembly, homodimer.

Its subcellular location is the cytoplasm. The protein localises to the nucleoid. Binds to DNA and alters its conformation. May be involved in regulation of gene expression, nucleoid organization and DNA protection. The sequence is that of Nucleoid-associated protein NMCC_1355 from Neisseria meningitidis serogroup C (strain 053442).